The sequence spans 379 residues: Endonuclease III homolog 1, chloroplastic (379 aa).

The N-terminal 54 residues, 1 to 54 (MILLVNGGAATSIHPNAARFYRIGTMSRQIHGAVSSSKHISLKTQHPLSDSNSE), are a transit peptide targeting the chloroplast. One can recognise a HhH domain in the interval 244–272 (KYDGDIPSSLDDLLSLPGIGPKMAHLILH). Lys-265 acts as the Nucleophile; for N-glycosylase activity in catalysis. Residues Cys-340, Cys-347, Cys-350, and Cys-356 each coordinate [4Fe-4S] cluster.

The protein belongs to the Nth/MutY family. [4Fe-4S] cluster serves as cofactor. As to expression, expressed at low levels in roots, stems, leaves and flowers.

The protein localises to the plastid. It localises to the chloroplast stroma. It is found in the chloroplast nucleoid. The enzyme catalyses 2'-deoxyribonucleotide-(2'-deoxyribose 5'-phosphate)-2'-deoxyribonucleotide-DNA = a 3'-end 2'-deoxyribonucleotide-(2,3-dehydro-2,3-deoxyribose 5'-phosphate)-DNA + a 5'-end 5'-phospho-2'-deoxyribonucleoside-DNA + H(+). Bifunctional DNA N-glycosylase with associated apurinic/apyrimidinic (AP) lyase function that catalyzes the first step in base excision repair (BER), the primary repair pathway for the repair of oxidative DNA damage. The DNA N-glycosylase activity releases the damaged DNA base from DNA by cleaving the N-glycosidic bond, leaving an AP site. The AP lyase activity cleaves the phosphodiester bond 3' to the AP site by a beta-elimination. Primarily recognizes and repairs oxidative base damage of pyrimidines. This Arabidopsis thaliana (Mouse-ear cress) protein is Endonuclease III homolog 1, chloroplastic.